Here is a 140-residue protein sequence, read N- to C-terminus: RxLR effector protein CRE9 (140 aa).

An N-terminal signal peptide occupies residues M1 to A24. The RxLR-dEER signature appears at R43 to R61. The helical transmembrane segment at L119–L139 threads the bilayer.

Belongs to the RxLR effector family.

The protein localises to the secreted. Its subcellular location is the host cell. It is found in the membrane. Its function is as follows. Effector that is involved in host plant infection. Contributes to virulence during the early infection stage, by inhibiting plant defense responses induced by both PAMP-triggered immunity (PTI) and effector-triggered immunity (ETI). This chain is RxLR effector protein CRE9, found in Phytophthora infestans (strain T30-4) (Potato late blight agent).